Consider the following 388-residue polypeptide: Succinate--CoA ligase [ADP-forming] subunit beta (388 aa).

One can recognise an ATP-grasp domain in the interval 9 to 245 (KELLAGYGLP…KSQENERELK (237 aa)). ATP is bound by residues lysine 46, 53-55 (GRG), glutamate 100, tyrosine 103, and glutamate 108. Mg(2+) contacts are provided by asparagine 200 and aspartate 214. Substrate-binding positions include asparagine 265 and 322-324 (GIV).

Belongs to the succinate/malate CoA ligase beta subunit family. Heterotetramer of two alpha and two beta subunits. Mg(2+) serves as cofactor.

It catalyses the reaction succinate + ATP + CoA = succinyl-CoA + ADP + phosphate. It carries out the reaction GTP + succinate + CoA = succinyl-CoA + GDP + phosphate. The protein operates within carbohydrate metabolism; tricarboxylic acid cycle; succinate from succinyl-CoA (ligase route): step 1/1. Succinyl-CoA synthetase functions in the citric acid cycle (TCA), coupling the hydrolysis of succinyl-CoA to the synthesis of either ATP or GTP and thus represents the only step of substrate-level phosphorylation in the TCA. The beta subunit provides nucleotide specificity of the enzyme and binds the substrate succinate, while the binding sites for coenzyme A and phosphate are found in the alpha subunit. In Neisseria meningitidis serogroup C (strain 053442), this protein is Succinate--CoA ligase [ADP-forming] subunit beta.